The sequence spans 415 residues: tRNA(Met) cytidine acetate ligase (415 aa).

Residues 7–20, Gly-101, Asn-162, and 187–188 contribute to the ATP site; these read VVEY…HLYH and RI.

The protein belongs to the TmcAL family. In terms of assembly, homodimer.

Its subcellular location is the cytoplasm. It catalyses the reaction cytidine(34) in elongator tRNA(Met) + acetate + ATP = N(4)-acetylcytidine(34) in elongator tRNA(Met) + AMP + diphosphate. Catalyzes the formation of N(4)-acetylcytidine (ac(4)C) at the wobble position of elongator tRNA(Met), using acetate and ATP as substrates. First activates an acetate ion to form acetyladenylate (Ac-AMP) and then transfers the acetyl group to tRNA to form ac(4)C34. In Bacillus subtilis (strain 168), this protein is tRNA(Met) cytidine acetate ligase.